A 365-amino-acid polypeptide reads, in one-letter code: Genome polyprotein (365 aa).

2 disordered regions span residues 56 to 136 and 334 to 365; these read VDAG…AGTT and GNVGETQENTERHTAGDVSRNMHSLLGVQQHH. Residues 68–98 are compositionally biased toward low complexity; it reads GTQPPATGAAAQGGAQPPATGAAAQPPTTQG. A compositionally biased stretch (gly residues) spans 105–123; that stretch reads GATGGGGAQTGAGGTGSVT.

It belongs to the potyviridae genome polyprotein family. Genome polyprotein of potyviruses undergoes post-translational proteolytic processing by the main proteinase NIa-pro resulting in the production of at least ten individual proteins. The P1 proteinase and the HC-pro cleave only their respective C-termini autocatalytically. 6K1 is essential for proper proteolytic separation of P3 from CI.

The protein resides in the virion. The enzyme catalyses RNA(n) + a ribonucleoside 5'-triphosphate = RNA(n+1) + diphosphate. Its function is as follows. An RNA-dependent RNA polymerase that plays an essential role in the virus replication. Functionally, involved in aphid transmission, cell-to-cell and systemis movement, encapsidation of the viral RNA and in the regulation of viral RNA amplification. The polypeptide is Genome polyprotein (Eleusine (Sorghum)).